Reading from the N-terminus, the 107-residue chain is uncharacterized protein (107 aa).

A helical membrane pass occupies residues 25–42 (LSLCSVLLSWLICAMCLW).

It is found in the host membrane. This is an uncharacterized protein from Galliformes (FAdV-1).